The following is a 276-amino-acid chain: GPN-loop GTPase 3 (276 aa).

A GTP-binding site is contributed by 13 to 18 (SSGKST). The short motif at 70–72 (GPN) is the Gly-Pro-Asn (GPN)-loop; involved in dimer interface element. 173–176 (SKMD) is a binding site for GTP. The segment at 257–276 (EDQEPKDPDRFEADDLEDDE) is disordered. The span at 259–269 (QEPKDPDRFEA) shows a compositional bias: basic and acidic residues.

Belongs to the GPN-loop GTPase family. Heterodimers with gpn1 or gpn2. Binds to RNA polymerase II (RNAPII).

The protein localises to the cytoplasm. Its subcellular location is the nucleus. Its function is as follows. Small GTPase required for proper nuclear import of RNA polymerase II and III (RNAPII and RNAPIII). May act at an RNAP assembly step prior to nuclear import. The chain is GPN-loop GTPase 3 from Schizosaccharomyces pombe (strain 972 / ATCC 24843) (Fission yeast).